We begin with the raw amino-acid sequence, 321 residues long: Ribosomal RNA small subunit methyltransferase H (321 aa).

S-adenosyl-L-methionine-binding positions include 40 to 42 (GGH), aspartate 60, phenylalanine 84, aspartate 106, and glutamine 113.

Belongs to the methyltransferase superfamily. RsmH family.

The protein localises to the cytoplasm. It carries out the reaction cytidine(1402) in 16S rRNA + S-adenosyl-L-methionine = N(4)-methylcytidine(1402) in 16S rRNA + S-adenosyl-L-homocysteine + H(+). Its function is as follows. Specifically methylates the N4 position of cytidine in position 1402 (C1402) of 16S rRNA. The polypeptide is Ribosomal RNA small subunit methyltransferase H (Haemophilus influenzae (strain ATCC 51907 / DSM 11121 / KW20 / Rd)).